Here is a 100-residue protein sequence, read N- to C-terminus: Large ribosomal subunit protein bL27 (100 aa).

A propeptide spanning residues 1 to 9 (MIIMNLQIF) is cleaved from the precursor. Residues 13-32 (KGMGSSKNGRDSESKRLGTK) are disordered.

Belongs to the bacterial ribosomal protein bL27 family. Post-translationally, the N-terminus is cleaved by ribosomal processing cysteine protease Prp.

In Clostridium kluyveri (strain ATCC 8527 / DSM 555 / NBRC 12016 / NCIMB 10680 / K1), this protein is Large ribosomal subunit protein bL27.